We begin with the raw amino-acid sequence, 556 residues long: 2,3-bisphosphoglycerate-independent phosphoglycerate mutase (556 aa).

2 residues coordinate Mn(2+): Asp-25 and Ser-78. The active-site Phosphoserine intermediate is the Ser-78. Substrate contacts are provided by residues His-137, 167-168 (RD), Arg-203, Arg-210, 283-286 (RADR), and Lys-358. Positions 427, 431, 468, 469, and 498 each coordinate Mn(2+).

The protein belongs to the BPG-independent phosphoglycerate mutase family. Monomer. Mn(2+) serves as cofactor. As to expression, found ubiquitously in germinating seed.

It localises to the cytoplasm. It catalyses the reaction (2R)-2-phosphoglycerate = (2R)-3-phosphoglycerate. Its pathway is carbohydrate degradation; glycolysis; pyruvate from D-glyceraldehyde 3-phosphate: step 3/5. Catalyzes the interconversion of 2-phosphoglycerate and 3-phosphoglycerate. The polypeptide is 2,3-bisphosphoglycerate-independent phosphoglycerate mutase (Ricinus communis (Castor bean)).